Consider the following 900-residue polypeptide: Vacuolar membrane protein pep3 (900 aa).

Residues Met-1 to Glu-20 are disordered. TPR repeat units follow at residues His-314–Glu-345, Asn-373–Leu-406, Gly-408–Val-436, and Met-546–Ile-579. Residues Asp-602–Glu-756 form a CHCR repeat. Residues Cys-837 to Gly-884 form an RING-type; atypical zinc finger.

The protein belongs to the VPS18 family.

The protein resides in the vacuole membrane. Functionally, required for vacuolar biogenesis. This Schizosaccharomyces pombe (strain 972 / ATCC 24843) (Fission yeast) protein is Vacuolar membrane protein pep3 (pep3).